Consider the following 422-residue polypeptide: Hispidin-3-hydroxylase (422 aa).

A helical membrane pass occupies residues 6–26 (NSLSVLIVGAGLGGLAAAIAL). The FAD site is built by alanine 50, arginine 108, and aspartate 318.

It belongs to the paxM FAD-dependent monooxygenase family. As to quaternary structure, monomer. FAD serves as cofactor.

The protein resides in the membrane. It carries out the reaction hispidin + NADH + O2 + H(+) = 3-hydroxyhispidin + NAD(+) + H2O. The catalysed reaction is hispidin + NADPH + O2 + H(+) = 3-hydroxyhispidin + NADP(+) + H2O. It functions in the pathway secondary metabolite biosynthesis. Functionally, hispidin-3-hydroxylase; part of the gene cluster that mediates the fungal bioluminescence cycle. Hydroxylates hispidin in order to produce the fungal luciferin 3-hydroxyhispidin. The fungal bioluminescence cycle begins with the hispidin synthetase that catalyzes the formation of hispidin which is further hydroxylated by the hispidin-3-hydroxylase, yielding the fungal luciferin 3-hydroxyhispidin. The luciferase then produces an endoperoxide as a high-energy intermediate with decomposition that yields oxyluciferin (also known as caffeoylpyruvate) and light emission. Oxyluciferin can be recycled to caffeic acid by caffeoylpyruvate hydrolase. This chain is Hispidin-3-hydroxylase, found in Neonothopanus nambi (Agaricus nambi).